Here is a 546-residue protein sequence, read N- to C-terminus: Chaperonin GroEL (546 aa).

ATP contacts are provided by residues 29 to 32 (TMGP), K50, 86 to 90 (DGTTT), G414, and D492.

The protein belongs to the chaperonin (HSP60) family. In terms of assembly, forms a cylinder of 14 subunits composed of two heptameric rings stacked back-to-back. Interacts with the co-chaperonin GroES.

The protein localises to the cytoplasm. It catalyses the reaction ATP + H2O + a folded polypeptide = ADP + phosphate + an unfolded polypeptide.. Functionally, together with its co-chaperonin GroES, plays an essential role in assisting protein folding. The GroEL-GroES system forms a nano-cage that allows encapsulation of the non-native substrate proteins and provides a physical environment optimized to promote and accelerate protein folding. This Helicobacter pylori (strain P12) protein is Chaperonin GroEL.